The chain runs to 688 residues: Glycine--tRNA ligase beta subunit (688 aa).

The protein belongs to the class-II aminoacyl-tRNA synthetase family. Tetramer of two alpha and two beta subunits.

It localises to the cytoplasm. It catalyses the reaction tRNA(Gly) + glycine + ATP = glycyl-tRNA(Gly) + AMP + diphosphate. The protein is Glycine--tRNA ligase beta subunit of Vibrio parahaemolyticus serotype O3:K6 (strain RIMD 2210633).